Reading from the N-terminus, the 273-residue chain is Phosphate import ATP-binding protein PstB (273 aa).

The ABC transporter domain maps to 26 to 268 (MRGEKVCVFY…PTEKRTQDYI (243 aa)). 58–65 (GPSGCGKS) is a binding site for ATP.

It belongs to the ABC transporter superfamily. Phosphate importer (TC 3.A.1.7) family. In terms of assembly, the complex is composed of two ATP-binding proteins (PstB), two transmembrane proteins (PstC and PstA) and a solute-binding protein (PstS).

It is found in the cell inner membrane. It catalyses the reaction phosphate(out) + ATP + H2O = ADP + 2 phosphate(in) + H(+). Part of the ABC transporter complex PstSACB involved in phosphate import. Responsible for energy coupling to the transport system. This Brucella abortus (strain 2308) protein is Phosphate import ATP-binding protein PstB.